We begin with the raw amino-acid sequence, 459 residues long: Bifunctional protein GlmU (459 aa).

A pyrophosphorylase region spans residues 1–230 (MSNRFAVILA…FDETLGVNDR (230 aa)). Residues 9 to 12 (LAAG), Lys-23, Gln-73, and 78 to 79 (GT) contribute to the UDP-N-acetyl-alpha-D-glucosamine site. Asp-103 is a binding site for Mg(2+). Positions 140, 155, 170, and 228 each coordinate UDP-N-acetyl-alpha-D-glucosamine. Asn-228 is a binding site for Mg(2+). A linker region spans residues 231–251 (VALSQAEIIMKNRINRKNMVN). The segment at 252-459 (GVTIIDPSNT…VDQLLNKKKS (208 aa)) is N-acetyltransferase. UDP-N-acetyl-alpha-D-glucosamine-binding residues include Arg-333 and Lys-351. His-363 acts as the Proton acceptor in catalysis. Residues Tyr-366 and Asn-377 each coordinate UDP-N-acetyl-alpha-D-glucosamine. Residues 386 to 387 (NY), Ala-423, and Arg-440 each bind acetyl-CoA.

In the N-terminal section; belongs to the N-acetylglucosamine-1-phosphate uridyltransferase family. It in the C-terminal section; belongs to the transferase hexapeptide repeat family. Homotrimer. It depends on Mg(2+) as a cofactor.

It is found in the cytoplasm. The catalysed reaction is alpha-D-glucosamine 1-phosphate + acetyl-CoA = N-acetyl-alpha-D-glucosamine 1-phosphate + CoA + H(+). It catalyses the reaction N-acetyl-alpha-D-glucosamine 1-phosphate + UTP + H(+) = UDP-N-acetyl-alpha-D-glucosamine + diphosphate. It participates in nucleotide-sugar biosynthesis; UDP-N-acetyl-alpha-D-glucosamine biosynthesis; N-acetyl-alpha-D-glucosamine 1-phosphate from alpha-D-glucosamine 6-phosphate (route II): step 2/2. It functions in the pathway nucleotide-sugar biosynthesis; UDP-N-acetyl-alpha-D-glucosamine biosynthesis; UDP-N-acetyl-alpha-D-glucosamine from N-acetyl-alpha-D-glucosamine 1-phosphate: step 1/1. Its pathway is bacterial outer membrane biogenesis; LPS lipid A biosynthesis. Functionally, catalyzes the last two sequential reactions in the de novo biosynthetic pathway for UDP-N-acetylglucosamine (UDP-GlcNAc). The C-terminal domain catalyzes the transfer of acetyl group from acetyl coenzyme A to glucosamine-1-phosphate (GlcN-1-P) to produce N-acetylglucosamine-1-phosphate (GlcNAc-1-P), which is converted into UDP-GlcNAc by the transfer of uridine 5-monophosphate (from uridine 5-triphosphate), a reaction catalyzed by the N-terminal domain. This Bacillus cereus (strain ZK / E33L) protein is Bifunctional protein GlmU.